The primary structure comprises 97 residues: High mobility group protein homolog NHP1 (97 aa).

The disordered stretch occupies residues M1–K24. The segment at residues P23–A93 is a DNA-binding region (HMG box).

The protein localises to the nucleus. The protein is High mobility group protein homolog NHP1 of Babesia bovis.